The chain runs to 113 residues: Dolichyl-diphosphooligosaccharide--protein glycosyltransferase subunit dad1 (113 aa).

Topologically, residues 1 to 30 (MSVSVFSVVSRFLDEYVSSTPQRLKLLDAY) are cytoplasmic. The chain crosses the membrane as a helical span at residues 31–51 (LLYILLTGALQFLYCLLVGTF). Position 52 (Pro-52) is a topological domain, lumenal. Residues 53-73 (FNSFLSGFISSVGSFILAVCL) traverse the membrane as a helical segment. At 74–92 (RIQINPQNKSDFQGISPER) the chain is on the cytoplasmic side. The helical transmembrane segment at 93 to 113 (AFADFLFANTILHLVVVNFIG) threads the bilayer.

Belongs to the DAD/OST2 family. In terms of assembly, component of the oligosaccharyltransferase (OST) complex.

It is found in the endoplasmic reticulum membrane. Its pathway is protein modification; protein glycosylation. Functionally, subunit of the oligosaccharyl transferase (OST) complex that catalyzes the initial transfer of a defined glycan (Glc(3)Man(9)GlcNAc(2) in eukaryotes) from the lipid carrier dolichol-pyrophosphate to an asparagine residue within an Asn-X-Ser/Thr consensus motif in nascent polypeptide chains, the first step in protein N-glycosylation. N-glycosylation occurs cotranslationally and the complex associates with the Sec61 complex at the channel-forming translocon complex that mediates protein translocation across the endoplasmic reticulum (ER). All subunits are required for a maximal enzyme activity. The sequence is that of Dolichyl-diphosphooligosaccharide--protein glycosyltransferase subunit dad1 from Xenopus laevis (African clawed frog).